The following is a 446-amino-acid chain: MDIAAFFAAEVKPALGCTEPGAVALAAATAARHLPAPPERIHLRLSANIYKNGQSVGIPGAQGLRGNMLASALGALAGDADMGLQALAAVTADDVAAARALTERGAVTQEIVQDVPTVYAEAELYRPGHLVVAVVAGRHDRVAEVRHNGQVVYRAEDALGGDSLPPYMADLQRAAFGDLWNWADGIDADLARDLLRGAEMNLAVAEQGLANPWGLAVGHTLGMALRGGDCRNDSASDARAPGSCVPDACGPDISARVKATTAAAADVRMAGANQPVMSSAGSGNHGLTAIIPPALAARAWGRSDAELARALALSHLVTGAVKARTGRLTPLCGCAVAAGAGAAAALVRLADGTPAQAEQAVALVFSSVMGMICDGAKGGCALKVGTAAAEAWSAAQLALHGPGMTGAEGIVSPDFRASLRSLGEVSSLGFAAVDVAIIRLLERGVQ.

It belongs to the UPF0597 family.

The polypeptide is UPF0597 protein DvMF_1488 (Nitratidesulfovibrio vulgaris (strain DSM 19637 / Miyazaki F) (Desulfovibrio vulgaris)).